The following is a 531-amino-acid chain: Peptide chain release factor 3 (531 aa).

The region spanning 13–282 is the tr-type G domain; that stretch reads AKRRTFAIIS…TLIKYAPPPK (270 aa). GTP-binding positions include 22–29, 90–94, and 144–147; these read SHPDAGKT, DTPGH, and NKLD.

This sequence belongs to the TRAFAC class translation factor GTPase superfamily. Classic translation factor GTPase family. PrfC subfamily.

It localises to the cytoplasm. Increases the formation of ribosomal termination complexes and stimulates activities of RF-1 and RF-2. It binds guanine nucleotides and has strong preference for UGA stop codons. It may interact directly with the ribosome. The stimulation of RF-1 and RF-2 is significantly reduced by GTP and GDP, but not by GMP. The protein is Peptide chain release factor 3 of Psychrobacter cryohalolentis (strain ATCC BAA-1226 / DSM 17306 / VKM B-2378 / K5).